A 430-amino-acid chain; its full sequence is Adenylosuccinate synthetase (430 aa).

GTP-binding positions include glycine 13 to lysine 19 and glycine 41 to threonine 43. Aspartate 14 (proton acceptor) is an active-site residue. Positions 14 and 41 each coordinate Mg(2+). Residues aspartate 14–lysine 17, asparagine 39–histidine 42, threonine 130, arginine 144, glutamine 225, threonine 240, and arginine 304 each bind IMP. Residue histidine 42 is the Proton donor of the active site. Alanine 300 to arginine 306 is a binding site for substrate. GTP contacts are provided by residues arginine 306, lysine 332–aspartate 334, and serine 414–glycine 416.

The protein belongs to the adenylosuccinate synthetase family. Homodimer. Mg(2+) is required as a cofactor.

Its subcellular location is the cytoplasm. The enzyme catalyses IMP + L-aspartate + GTP = N(6)-(1,2-dicarboxyethyl)-AMP + GDP + phosphate + 2 H(+). It participates in purine metabolism; AMP biosynthesis via de novo pathway; AMP from IMP: step 1/2. Functionally, plays an important role in the de novo pathway of purine nucleotide biosynthesis. Catalyzes the first committed step in the biosynthesis of AMP from IMP. The chain is Adenylosuccinate synthetase from Xylella fastidiosa (strain M12).